Consider the following 300-residue polypeptide: UDP-3-O-acyl-N-acetylglucosamine deacetylase (300 aa).

Zn(2+) is bound by residues His78, His237, and Asp241. His264 (proton donor) is an active-site residue.

It belongs to the LpxC family. Requires Zn(2+) as cofactor.

It catalyses the reaction a UDP-3-O-[(3R)-3-hydroxyacyl]-N-acetyl-alpha-D-glucosamine + H2O = a UDP-3-O-[(3R)-3-hydroxyacyl]-alpha-D-glucosamine + acetate. Its pathway is glycolipid biosynthesis; lipid IV(A) biosynthesis; lipid IV(A) from (3R)-3-hydroxytetradecanoyl-[acyl-carrier-protein] and UDP-N-acetyl-alpha-D-glucosamine: step 2/6. Catalyzes the hydrolysis of UDP-3-O-myristoyl-N-acetylglucosamine to form UDP-3-O-myristoylglucosamine and acetate, the committed step in lipid A biosynthesis. This chain is UDP-3-O-acyl-N-acetylglucosamine deacetylase, found in Acinetobacter baumannii (strain AB307-0294).